Here is a 440-residue protein sequence, read N- to C-terminus: MQPQRLGPRAGMGPFCLGCSHRKCYSPIRNLISQETFKFHFKNLGYAKGRKDTFLCYEVTRKDCDSPVSLHHGVFKNKDNIHAEICFLYWFHDKVLKVLSPREEFKITWYMSWSPCFECAEQIVRFLATHHNLSLDIFSSRLYNVQDPETQQNLCRLVQEGAQVAAMDLYEFKKCWKKFVDNGGRRFRPWKRLLTNFRYQDSKLQEILRPCYISVPSSSSSTLSNICLTKGLPETRFWVEGRRMDPLSEEEFYSQFYNQRVKHLCYYHRMKPYLCYQLEQFNGQAPLKGCLLSEKGKQHAEILFLDKIRSMELSQVTITCYLTWSPCPNCAWQLAAFKRDRPDLILHIYTSRLYFHWKRPFQKGLCSLWQSGILVDVMDLPQFTDCWTNFVNPKRPFWPWKGLEIISRRTQRRLRRIKESWGLQDLVNDFGNLQLGPPMS.

2 consecutive CMP/dCMP-type deaminase domains span residues 49-165 (GRKD…AQVA) and 249-368 (EEEF…LCSL). His82 is a Zn(2+) binding site. Glu84 (proton donor) is an active-site residue. Residues Cys116, Cys119, His299, Cys327, and Cys330 each contribute to the Zn(2+) site.

It belongs to the cytidine and deoxycytidylate deaminase family. Homodimer. Interacts with mouse mammary tumor virus (MMTV) nucleocapsid protein p14. Requires Zn(2+) as cofactor. In terms of tissue distribution, expressed in spleen, node and lung.

It localises to the cytoplasm. The enzyme catalyses a 2'-deoxycytidine in single-stranded DNA + H2O + H(+) = a 2'-deoxyuridine in single-stranded DNA + NH4(+). Functionally, DNA deaminase (cytidine deaminase) which acts as an inhibitor of retrovirus replication and retrotransposon mobility via deaminase-dependent and -independent mechanisms. Selectively targets single-stranded DNA and does not deaminate double-stranded DNA or single- or double-stranded RNA. Exhibits antiviral activity against HIV-1, simian immunodeficiency viruses (SIVs), mouse mammary tumor virus (MMTV) and friend murine leukemia virus (FrMLV) and may inhibit the mobility of LTR retrotransposons. The sequence is that of DNA dC-&gt;dU-editing enzyme APOBEC-3 (Apobec3) from Mus musculus (Mouse).